Reading from the N-terminus, the 96-residue chain is (4S)-4-hydroxy-5-phosphonooxypentane-2,3-dione isomerase (96 aa).

The ABM domain occupies 2–91 (HVTLVEINVH…MTGPRTKKVF (90 aa)).

This sequence belongs to the LsrG family. In terms of assembly, homodimer.

It localises to the cytoplasm. It carries out the reaction (2S)-2-hydroxy-3,4-dioxopentyl phosphate = 3-hydroxy-2,4-dioxopentyl phosphate. Functionally, involved in the degradation of phospho-AI-2, thereby terminating induction of the lsr operon and closing the AI-2 signaling cycle. Catalyzes the conversion of (4S)-4-hydroxy-5-phosphonooxypentane-2,3-dione (P-DPD) to 3-hydroxy-5-phosphonooxypentane-2,4-dione (P-HPD). The polypeptide is (4S)-4-hydroxy-5-phosphonooxypentane-2,3-dione isomerase (Salmonella typhimurium (strain LT2 / SGSC1412 / ATCC 700720)).